The chain runs to 69 residues: MSRRCSVSGKGPLVGNNVSHANNKTKRRQLPNLRSVKITMEDGTTKRVKVAASTLRTMKKKAAQAAAAN.

Residues 1–27 (MSRRCSVSGKGPLVGNNVSHANNKTKR) form a disordered region.

It belongs to the bacterial ribosomal protein bL28 family.

This chain is Large ribosomal subunit protein bL28, found in Sulfurovum sp. (strain NBC37-1).